The primary structure comprises 453 residues: tRNA modification GTPase MnmE (453 aa).

R22, E79, and K119 together coordinate (6S)-5-formyl-5,6,7,8-tetrahydrofolate. Positions 215-376 (GMKVVIAGRP…LKQHLKSLMG (162 aa)) constitute a TrmE-type G domain. N225 contacts K(+). GTP contacts are provided by residues 225–230 (NAGKSS), 244–250 (TEIAGTT), 269–272 (DTAG), and 334–337 (NKAD). S229 serves as a coordination point for Mg(2+). 3 residues coordinate K(+): T244, I246, and T249. Mg(2+) is bound at residue T250. (6S)-5-formyl-5,6,7,8-tetrahydrofolate is bound at residue K453.

The protein belongs to the TRAFAC class TrmE-Era-EngA-EngB-Septin-like GTPase superfamily. TrmE GTPase family. In terms of assembly, homodimer. Heterotetramer of two MnmE and two MnmG subunits. The cofactor is K(+).

The protein localises to the cytoplasm. Exhibits a very high intrinsic GTPase hydrolysis rate. Involved in the addition of a carboxymethylaminomethyl (cmnm) group at the wobble position (U34) of certain tRNAs, forming tRNA-cmnm(5)s(2)U34. This chain is tRNA modification GTPase MnmE, found in Shewanella oneidensis (strain ATCC 700550 / JCM 31522 / CIP 106686 / LMG 19005 / NCIMB 14063 / MR-1).